Here is a 61-residue protein sequence, read N- to C-terminus: Large ribosomal subunit protein bL32 (61 aa).

Residues 1 to 22 (MAVPKKKTSRARRDRRRSHHAL) show a composition bias toward basic residues. The disordered stretch occupies residues 1–24 (MAVPKKKTSRARRDRRRSHHALRG).

The protein belongs to the bacterial ribosomal protein bL32 family.

This chain is Large ribosomal subunit protein bL32, found in Rubrobacter xylanophilus (strain DSM 9941 / JCM 11954 / NBRC 16129 / PRD-1).